A 370-amino-acid polypeptide reads, in one-letter code: Phosphoserine aminotransferase (370 aa).

Methionine 1 is subject to N-acetylmethionine. O-phospho-L-serine is bound by residues histidine 44 and arginine 45. The residue at position 51 (lysine 51) is an N6-acetyllysine. Pyridoxal 5'-phosphate-binding residues include glycine 79, cysteine 80, and tryptophan 107. Position 127 is an N6-acetyllysine (lysine 127). Residues threonine 156, aspartate 176, and glutamine 199 each contribute to the pyridoxal 5'-phosphate site. Residue lysine 200 is modified to N6-(pyridoxal phosphate)lysine. Residues asparagine 241 and threonine 242 each coordinate pyridoxal 5'-phosphate. Residues lysine 269, lysine 318, and lysine 323 each carry the N6-acetyllysine modification. Serine 331 carries the phosphoserine modification. Lysine 333 is modified (N6-acetyllysine). Histidine 335, arginine 336, and arginine 342 together coordinate O-phospho-L-serine.

This sequence belongs to the class-V pyridoxal-phosphate-dependent aminotransferase family. SerC subfamily. As to quaternary structure, homodimer. It depends on pyridoxal 5'-phosphate as a cofactor. In terms of tissue distribution, expressed at high levels in the brain, liver, kidney and pancreas, and very weakly expressed in the thymus, prostate, testis and colon.

It catalyses the reaction O-phospho-L-serine + 2-oxoglutarate = 3-phosphooxypyruvate + L-glutamate. It functions in the pathway amino-acid biosynthesis; L-serine biosynthesis; L-serine from 3-phospho-D-glycerate: step 2/3. With respect to regulation, phosphoserine transaminase activity is strongly stimulated by increasing the ionic strength. Involved in L-serine biosynthesis via the phosphorylated pathway, a three-step pathway converting the glycolytic intermediate 3-phospho-D-glycerate into L-serine. Catalyzes the second step, that is the pyridoxal 5'-phosphate-dependent transamination of 3-phosphohydroxypyruvate and L-glutamate to O-phosphoserine (OPS) and alpha-ketoglutarate. The protein is Phosphoserine aminotransferase of Homo sapiens (Human).